The chain runs to 346 residues: Tyrosine--tRNA ligase (346 aa).

Residue Tyr35 coordinates L-tyrosine. Positions 40 to 48 match the 'HIGH' region motif; that stretch reads PTGEMHIGH. Tyr162, Gln166, Asp169, and Gln184 together coordinate L-tyrosine.

This sequence belongs to the class-I aminoacyl-tRNA synthetase family. TyrS type 3 subfamily. In terms of assembly, homodimer.

It localises to the cytoplasm. The catalysed reaction is tRNA(Tyr) + L-tyrosine + ATP = L-tyrosyl-tRNA(Tyr) + AMP + diphosphate + H(+). Its function is as follows. Catalyzes the attachment of tyrosine to tRNA(Tyr) in a two-step reaction: tyrosine is first activated by ATP to form Tyr-AMP and then transferred to the acceptor end of tRNA(Tyr). This chain is Tyrosine--tRNA ligase, found in Haloarcula marismortui (strain ATCC 43049 / DSM 3752 / JCM 8966 / VKM B-1809) (Halobacterium marismortui).